The following is a 447-amino-acid chain: Phosphoglucosamine mutase (447 aa).

The active-site Phosphoserine intermediate is Ser104. Ser104, Asp243, Asp245, and Asp247 together coordinate Mg(2+). A Phosphoserine modification is found at Ser104.

The protein belongs to the phosphohexose mutase family. Mg(2+) serves as cofactor. Activated by phosphorylation.

It catalyses the reaction alpha-D-glucosamine 1-phosphate = D-glucosamine 6-phosphate. Its function is as follows. Catalyzes the conversion of glucosamine-6-phosphate to glucosamine-1-phosphate. This Corynebacterium efficiens (strain DSM 44549 / YS-314 / AJ 12310 / JCM 11189 / NBRC 100395) protein is Phosphoglucosamine mutase.